The sequence spans 985 residues: Protein psiQ (985 aa).

Residues 1 to 20 (MMKYIYILLIFSLLFLKINS) form the signal peptide. The PA14 domain occupies 102–247 (QSTTNPNVYA…YDECGVCQGD (146 aa)). 15 N-linked (GlcNAc...) asparagine glycosylation sites follow: Asn-127, Asn-309, Asn-424, Asn-491, Asn-517, Asn-527, Asn-592, Asn-620, Asn-649, Asn-696, Asn-735, Asn-767, Asn-786, Asn-824, and Asn-842.

The protein belongs to the prespore-cell-inducing factor family.

It is found in the secreted. This is Protein psiQ (psiQ) from Dictyostelium discoideum (Social amoeba).